The chain runs to 64 residues: Putative isoleucine--tRNA ligase (64 aa).

It belongs to the class-I aminoacyl-tRNA synthetase family. In terms of assembly, member of a complex that includes annexin.

The enzyme catalyses tRNA(Ile) + L-isoleucine + ATP = L-isoleucyl-tRNA(Ile) + AMP + diphosphate. The sequence is that of Putative isoleucine--tRNA ligase from Physarum polycephalum (Slime mold).